A 486-amino-acid polypeptide reads, in one-letter code: Small ribosomal subunit protein uS4m (486 aa).

Residues 103 to 172 (KRLDFALFRA…AKKPSFQEAL (70 aa)) enclose the S4 RNA-binding domain.

It belongs to the universal ribosomal protein uS4 family. Component of the mitochondrial small ribosomal subunit (mt-SSU). Mature yeast 74S mitochondrial ribosomes consist of a small (37S) and a large (54S) subunit. The 37S small subunit contains a 15S ribosomal RNA (15S mt-rRNA) and 34 different proteins. The 54S large subunit contains a 21S rRNA (21S mt-rRNA) and 46 different proteins. uS3m, uS4m and uS5m form the narrow entry site of the mRNA channel.

It is found in the mitochondrion. Functionally, component of the mitochondrial ribosome (mitoribosome), a dedicated translation machinery responsible for the synthesis of mitochondrial genome-encoded proteins, including at least some of the essential transmembrane subunits of the mitochondrial respiratory chain. The mitoribosomes are attached to the mitochondrial inner membrane and translation products are cotranslationally integrated into the membrane. The protein is Small ribosomal subunit protein uS4m (NAM9) of Saccharomyces cerevisiae (strain ATCC 204508 / S288c) (Baker's yeast).